We begin with the raw amino-acid sequence, 988 residues long: Putative disease resistance protein RGA4 (988 aa).

The region spanning 137 to 439 (AAAATRETGF…MAHGFLLSKG (303 aa)) is the NB-ARC domain. 184 to 191 (GMGGLGKT) is a binding site for ATP. LRR repeat units lie at residues 526–548 (FVSL…SIGD), 549–572 (LLHL…LCKL), 574–595 (NLQT…QTSK), 596–620 (LSSL…GLLT), 638–662 (LGEL…KNDT), 674–696 (LQSL…EVKV), 751–776 (LPCL…DVHS), 784–808 (FPSL…EGEE), 829–851 (LSSV…SISN), 852–876 (LSTL…MFTS), 878–900 (TNLE…SLTS), 901–925 (LNAL…GLEG), 927–950 (TSLT…LQHL), and 966–988 (KRCD…LDIH).

Belongs to the disease resistance NB-LRR family.

Its function is as follows. Disease resistance protein. Resistance proteins guard the plant against pathogens that contain an appropriate avirulence protein via a direct or indirect interaction with this avirulence protein. That triggers a defense system which restricts the pathogen growth. The polypeptide is Putative disease resistance protein RGA4 (RGA4) (Solanum bulbocastanum (Wild potato)).